Consider the following 282-residue polypeptide: Dihydropteroate synthase (282 aa).

A Pterin-binding domain is found at P15–R267. Residue N22 coordinates Mg(2+). Residues T62, D96, N115, D185, K221, and R255 to H257 each bind (7,8-dihydropterin-6-yl)methyl diphosphate.

Belongs to the DHPS family. As to quaternary structure, homodimer. Mg(2+) serves as cofactor.

It carries out the reaction (7,8-dihydropterin-6-yl)methyl diphosphate + 4-aminobenzoate = 7,8-dihydropteroate + diphosphate. It functions in the pathway cofactor biosynthesis; tetrahydrofolate biosynthesis; 7,8-dihydrofolate from 2-amino-4-hydroxy-6-hydroxymethyl-7,8-dihydropteridine diphosphate and 4-aminobenzoate: step 1/2. Catalyzes the condensation of para-aminobenzoate (pABA) with 6-hydroxymethyl-7,8-dihydropterin diphosphate (DHPt-PP) to form 7,8-dihydropteroate (H2Pte), the immediate precursor of folate derivatives. The chain is Dihydropteroate synthase (folP) from Shigella flexneri.